Reading from the N-terminus, the 993-residue chain is Serine/threonine-protein phosphatase 6 regulatory ankyrin repeat subunit B (993 aa).

28 ANK repeats span residues 7 to 36 (TDQPPLVQAIFSGDPEEIRMLIHKTEDVNT), 40 to 69 (EKRTPLHVAAFLGDAEIIELLILSGARVNA), 73 to 102 (MWLTPLHRAVASRSEEAVQVLIKHSADVNA), 106 to 135 (NWQTPLHVAAANKAVKCAEVIIPLLSSVNV), 139 to 168 (GGRTALHHAALNGHVEMVNLLLAKGANINA), 172 to 201 (KDRRALHWAAYMGHLDVVALLINHGAEVTC), 205 to 234 (KGYTPLHAAASNGQINVVKHLLNLGVEIDE), 238 to 267 (YGNTALHIACYNGQDAVVNELIDYGANVNQ), 271 to 301 (NGFTPLHFAAASTHGALCLELLVNNGADVNI), 305 to 334 (DGKSPLHMTAVHGRFTRSQTLIQNGGEIDC), 338 to 367 (DGNTPLHVAARYGHELLINTLITSGADTAK), 371 to 400 (HSMFPLHLAALNAHSDCCRKLLSSGFEIDT), 404 to 433 (FGRTCLHAAAAGGNVECIKLLQSSGADFHK), 437 to 466 (CGRTPLHYAAANCHFHCIETLVTTGANVNE), 470 to 498 (WGRTALHYAAASDMDRNKTILGNAHDNSE), 531 to 561 (EGYNSIHYAAAYGHRQCLELLLERTNSGFEE), 566 to 595 (ATKSPLHLAAYNGHHQALEVLLQSLVDLDI), 599 to 628 (KGRTALDLAAFKGHTECVEALINQGASIFV), 633 to 662 (TKRTPLHASVINGHTLCLRLLLEIADNPEA), 669 to 698 (KGQTPLMLAVAYGHIDAVSLLLEKEANVDT), 702 to 731 (LGCTALHRGIMTGHEECVQMLLEQEVSILC), 735 to 764 (RGRTPLHYAAARGHATWLSELLQMALSEED), 771 to 800 (QGYTPLHWACYNGNENCIEVLLEQKCFRKF), 803 to 832 (NPFTPLHCAIINDHGNCASLLLGAIDSSIV), 838 to 867 (KGRTPLHAAAFADHVECLQLLLRHSAPVNA), 871 to 901 (SGKTALMMAAENGQAGAVDILVNSAQADLTV), 905 to 934 (DLNTPLHLACSKGHEKCALLILDKIQDESL), and 941 to 970 (ALQTPLHVAARNGLKVVVEELLAKGACVLA).

In terms of assembly, protein phosphatase 6 (PP6) holoenzyme is proposed to be a heterotrimeric complex formed by the catalytic subunit, a SAPS domain-containing subunit (PP6R) and an ankyrin repeat-domain containing regulatory subunit (ARS). Interacts with PPP6R1.

Functionally, putative regulatory subunit of protein phosphatase 6 (PP6) that may be involved in the recognition of phosphoprotein substrates. The polypeptide is Serine/threonine-protein phosphatase 6 regulatory ankyrin repeat subunit B (ANKRD44) (Homo sapiens (Human)).